The primary structure comprises 628 residues: WW domain-containing adapter protein with coiled-coil (628 aa).

3 disordered regions span residues 1 to 130 (MVMY…DDWS), 152 to 338 (EKPK…PQSP), and 417 to 532 (NQSP…SARS). Over residues 37–49 (SSDHRHDKMRDST) the composition is skewed to basic and acidic residues. Positions 74–84 (GKAKSMHLHRV) are enriched in basic residues. Residues 101–121 (NHSAIHSSNSHSSTPSKTSDS) are compositionally biased toward low complexity. One can recognise a WW domain in the interval 123–156 (YDPADDWSEHISSSGKKYYYNCRTEVSQWEKPKE). 2 stretches are compositionally biased toward basic and acidic residues: residues 152-168 (EKPK…KETS) and 176-185 (PKDRDYRREA). Over residues 199–213 (DTSTMLPQNILSQTS) the composition is skewed to polar residues. A compositionally biased stretch (basic and acidic residues) spans 214 to 227 (RHNDRDYRLPRTDS). 2 stretches are compositionally biased toward low complexity: residues 230–260 (SAAP…TVQP) and 299–331 (SDKS…TVPV). The span at 420–446 (PMSLTSDASSPRSYVSPRISTPQTNTV) shows a compositional bias: polar residues. Low complexity predominate over residues 467-486 (GSKQGSSAQTASQQSSAADK). The segment covering 511 to 532 (PNHNSSTCASSTSAPQNSSARS) has biased composition (polar residues). Residues 599–625 (QATLREQRILFLRQQIKELEKLKNQNS) adopt a coiled-coil conformation.

Its subcellular location is the nucleus. In terms of biological role, acts as a linker between gene transcription and histone H2B monoubiquitination at 'Lys-120' (H2BK120ub1). Positive regulator of amino acid starvation-induced autophagy. Positively regulates MTOR activity. May negatively regulate the ubiquitin proteasome pathway. In Xenopus tropicalis (Western clawed frog), this protein is WW domain-containing adapter protein with coiled-coil (wac).